The sequence spans 488 residues: Regulatory protein ViaA (488 aa).

Belongs to the ViaA family. In terms of assembly, homodimer. Interacts with RavA.

The protein resides in the cytoplasm. Component of the RavA-ViaA chaperone complex, which may act on the membrane to optimize the function of some of the respiratory chains. ViaA stimulates the ATPase activity of RavA. The protein is Regulatory protein ViaA of Yersinia enterocolitica serotype O:8 / biotype 1B (strain NCTC 13174 / 8081).